The following is a 251-amino-acid chain: Histocompatibility antigen 60b (251 aa).

An N-terminal signal peptide occupies residues 1–24; that stretch reads MAKSSLSLNWSLLVLLNFLGATLS. Topologically, residues 25–212 are extracellular; it reads TGTDSLSCEL…NSDTQGLSFT (188 aa). Residues Asn-63, Asn-93, Asn-126, and Asn-189 are each glycosylated (N-linked (GlcNAc...) asparagine). The helical transmembrane segment at 213–233 threads the bilayer; that stretch reads WIVIICIGGIVSFMAFMVFAW. The Cytoplasmic segment spans residues 234-251; sequence CMLKKKKGALCCSSSSTT.

Belongs to the NKG2D ligand family. As to expression, in strain C57BL/6J, strongly expressed in cardiac muscle and skeletal muscle, with lower expression levels in spleen, liver, kidney and thymus. In strain BALB/cJ, weakly expressed in cardiac muscle, spleen, kidney and thymus.

Its subcellular location is the cell membrane. Ligand for the KLRK1 immunosurveillance receptor. Binding to KLRK1 stimulates cell lysis in vitro. In Mus musculus (Mouse), this protein is Histocompatibility antigen 60b.